Here is a 427-residue protein sequence, read N- to C-terminus: Rhodocoxin reductase (427 aa).

2 to 34 (SIVIIGSGQAGFEAAVSLRSHGFSGTITLVGDE) is an FAD binding site. 144–172 (SLVVIGAGFIGLEVAAAARKKGLDVTVVE) provides a ligand contact to NAD(+).

Belongs to the FAD-dependent oxidoreductase family. It depends on FAD as a cofactor.

The degradation of the thiocarbamate herbicide EPTC by cytochrome CYP116 (thcB) requires the participation of a flavoprotein, rhodocoxin reductase, and an iron-sulfur protein, rhodocoxin, to mediate the transfer of electrons from NADH to P450 for oxygen activation. The sequence is that of Rhodocoxin reductase (thcD) from Rhodococcus erythropolis (Arthrobacter picolinophilus).